Consider the following 366-residue polypeptide: Transmembrane protein 26 (366 aa).

The next 3 helical transmembrane spans lie at 4–24 (LVLLKALVTRLLFLLHSLVAV), 36–56 (YWLLALLNLLLVLETVLTLKF), and 64–84 (WLSPAIFVYLVNIMPSLWLLE). The N-linked (GlcNAc...) asparagine glycan is linked to Asn-110. 5 consecutive transmembrane segments (helical) span residues 138-158 (MVCEPVWTLGLHQTLLLILII), 176-196 (ELLLMFVGTAADILEFTTETL), 208-228 (VSGILVVWTWSMLQFPLDLAV), 258-278 (IGLSFFIQDGPFLVVRLVLMI), and 282-302 (VINHMLVFFAVKNSLVMALHF). Over residues 319 to 329 (HPESPKPEHSG) the composition is skewed to basic and acidic residues. The disordered stretch occupies residues 319-366 (HPESPKPEHSGPDQPSESGPSEWEDASPEALPLRTSPVTSEESYPTTP). Polar residues predominate over residues 354 to 366 (SPVTSEESYPTTP).

The protein resides in the membrane. This Mus musculus (Mouse) protein is Transmembrane protein 26 (Tmem26).